Here is a 502-residue protein sequence, read N- to C-terminus: MAWALKLPLADEVIESGLVQDFDASLSGIGQELGAGAYSMSDVLALPIFKQEESSLPPDNENEILPFQYVLCAATSPAVKLHDETLTYLNQGQSYEIRMLDNRKLGELPELNGKLVKSIFRVVFHDRRLQYTEHQQLEGWRWNRPGDRILDIDIPMSVGVIDPRANPTQLNTVEFLWDPSKRTSVFIQVHCISTEFTMRKHGGEKGVPFRVQIDTFKENGNGEYTEHLHSASCQIKVFKPKGADRKQKIDREKMEKRTPHEKEKYQPSYETTILTECSPWPEITYVNNSPSPGFNSSHSSFSLGEGNGSPNHQPEPPPPVTDNLLPTTTPQEAQQWLHRNRFSTFTRLFTNFSGADLLKLTRDDVIQICGPADGIRLFNALKGRMVRPRLTIYVCQESLQLREQQPQPQPQPQKQEDGDSNGTFFVYHAIYLEELTAVELTEKIAQLFSISPHQISQIYKQGPTGIHVVISDEMVQNFQEEACFILDTMEAETSDSYHVILK.

A Grh/CP2 DB domain is found at 63–300 (EILPFQYVLC…SPGFNSSHSS (238 aa)). The segment at 133-386 (EHQQLEGWRW…LFNALKGRMV (254 aa)) is DNA-binding. Positions 241-265 (KGADRKQKIDREKMEKRTPHEKEKY) are enriched in basic and acidic residues. 2 disordered regions span residues 241–268 (KGADRKQKIDREKMEKRTPHEKEKYQPS) and 294–326 (FNSSHSSFSLGEGNGSPNHQPEPPPPVTDNLLP). Ser-353 bears the Phosphoserine mark.

Belongs to the grh/CP2 family. CP2 subfamily. In terms of assembly, binds to DNA as a dimer. Interacts with UBP1 and PIAS1, and is probably part of a complex containing TFCP2, UBP1 and PIAS1. Component of the SSP (stage selector protein) complex, which appears to be a heteromer of TFCP2 and 2 copies of NFE4.

The protein resides in the nucleus. Binds a variety of cellular promoters including fibrinogen, alpha-globin promoters. Activation of the alpha-globin promoter in erythroid cells is via synergistic interaction with UBP1. Functions as part of the SSP (stage selector protein) complex. Facilitates the interaction of the gamma-globin genes with enhancer elements contained in the locus control region in fetal erythroid cells. Interacts by binding to the stage selector element (SSE) in the proximal gamma-globin promoter. This Mus musculus (Mouse) protein is Alpha-globin transcription factor CP2 (Tfcp2).